A 362-amino-acid chain; its full sequence is Type-1 angiotensin II receptor A (362 aa).

Over 1–26 the chain is Extracellular; that stretch reads MSNASTVETSDVERIAVNCSKSGMHN. Residues N3 and N18 are each glycosylated (N-linked (GlcNAc...) asparagine). Disulfide bonds link C19/C273 and C102/C181. The chain crosses the membrane as a helical span at residues 27–56; the sequence is YIFIAIPIIYSTIFVVGVFGNSMVVIVIYS. Over 57 to 62 the chain is Cytoplasmic; the sequence is YMKMKT. Residues 63-90 form a helical membrane-spanning segment; sequence VASIFLMNLALSDLCFVITLPLWAAYTA. The Extracellular portion of the chain corresponds to 91–99; sequence MHYHWPFGN. The helical transmembrane segment at 100-126 threads the bilayer; that stretch reads FLCKVASTAITLNLYTTVFLLTCLSID. The Cytoplasmic portion of the chain corresponds to 127-142; the sequence is RYSAIVHPMKSRIWRT. Residues 143–166 form a helical membrane-spanning segment; sequence AMVARLTCVGIWLVAFLASMPSII. Over 167–191 the chain is Extracellular; that stretch reads YRQIYLFHDTNQTVCAIVYDSGHIY. R168 contacts angiotensin II. Residue N177 is glycosylated (N-linked (GlcNAc...) asparagine). Y185 and K200 together coordinate angiotensin II. Residues 192-217 traverse the membrane as a helical segment; the sequence is FMVGMSLAKNIVGFLIPFLIILTSYT. Over 218 to 238 the chain is Cytoplasmic; the sequence is LIGKTLKEVYRAQRARNDDIF. A helical membrane pass occupies residues 239–267; it reads KMIVAVVLLFFFCWIPYQVFTFLDVLIQM. At 268-277 the chain is on the extracellular side; sequence DVIQNCKMYD. The chain crosses the membrane as a helical span at residues 278-303; it reads IVDTGMPITICIAYFNSCLNPFLYGF. Residues 304-362 lie on the Cytoplasmic side of the membrane; the sequence is FGKNFRKHFLQLIKYIPPKMRTHASVNTKSSLVSSSLSDTKRASKKIALQMTDNEEHCK. C361 carries the S-palmitoyl cysteine lipid modification.

The protein belongs to the G-protein coupled receptor 1 family. Post-translationally, C-terminal Ser or Thr residues may be phosphorylated. As to expression, expressed in lung, liver, kidney, and spleen, with highest expression in the heart.

The protein resides in the cell membrane. Receptor for angiotensin II, a vasoconstricting peptide, which acts as a key regulator of blood pressure and sodium retention by the kidney. The activated receptor in turn couples to G-alpha proteins G(q) (GNAQ, GNA11, GNA14 or GNA15) and thus activates phospholipase C and increases the cytosolic Ca(2+) concentrations, which in turn triggers cellular responses such as stimulation of protein kinase C. The chain is Type-1 angiotensin II receptor A (agtr1-a) from Xenopus laevis (African clawed frog).